The following is a 202-amino-acid chain: ATP-dependent Clp protease proteolytic subunit (202 aa).

Ser-101 serves as the catalytic Nucleophile. The active site involves His-126.

The protein belongs to the peptidase S14 family. Component of the chloroplastic Clp protease core complex.

The protein localises to the plastid. It localises to the chloroplast stroma. The catalysed reaction is Hydrolysis of proteins to small peptides in the presence of ATP and magnesium. alpha-casein is the usual test substrate. In the absence of ATP, only oligopeptides shorter than five residues are hydrolyzed (such as succinyl-Leu-Tyr-|-NHMec, and Leu-Tyr-Leu-|-Tyr-Trp, in which cleavage of the -Tyr-|-Leu- and -Tyr-|-Trp bonds also occurs).. Cleaves peptides in various proteins in a process that requires ATP hydrolysis. Has a chymotrypsin-like activity. Plays a major role in the degradation of misfolded proteins. The polypeptide is ATP-dependent Clp protease proteolytic subunit (Calycanthus floridus var. glaucus (Eastern sweetshrub)).